Consider the following 355-residue polypeptide: Enhancer of mRNA-decapping protein 1 (355 aa).

Disordered regions lie at residues 1 to 146 (MSSD…VDGM), 210 to 230 (MSQP…SQPM), and 301 to 330 (NSTA…KSSQ). Polar residues predominate over residues 39–49 (AQKQQLPNGEQ). Over residues 57 to 67 (KQSRKRGSGRQ) the composition is skewed to basic residues. Residues 91 to 110 (SIPSGSAGSESAQKETSAGQ) are compositionally biased toward polar residues. Residues 123–142 (VPAGGPAGKSSSEPASASSA) are compositionally biased toward low complexity.

The protein belongs to the EDC family.

It localises to the cytoplasm. MRNA-binding protein which stimulates mRNA decapping. In Eremothecium gossypii (strain ATCC 10895 / CBS 109.51 / FGSC 9923 / NRRL Y-1056) (Yeast), this protein is Enhancer of mRNA-decapping protein 1 (EDC1).